The sequence spans 165 residues: Ribosome maturation factor RimM (165 aa).

A PRC barrel domain is found at glutamate 94–arginine 163.

Belongs to the RimM family. Binds ribosomal protein uS19.

The protein localises to the cytoplasm. In terms of biological role, an accessory protein needed during the final step in the assembly of 30S ribosomal subunit, possibly for assembly of the head region. Essential for efficient processing of 16S rRNA. May be needed both before and after RbfA during the maturation of 16S rRNA. It has affinity for free ribosomal 30S subunits but not for 70S ribosomes. The polypeptide is Ribosome maturation factor RimM (Rickettsia akari (strain Hartford)).